Consider the following 525-residue polypeptide: tRNA-2-methylthio-N(6)-dimethylallyladenosine synthase (525 aa).

The MTTase N-terminal domain occupies 14–130 (RTYQVRTYGC…LPTLLERARH (117 aa)). [4Fe-4S] cluster is bound by residues Cys-23, Cys-59, Cys-93, Cys-167, Cys-171, and Cys-174. Positions 153–400 (RESAYAGWVS…IELQERISLE (248 aa)) constitute a Radical SAM core domain. Residues 403–482 (QAQVGRTLEL…PHHLIADGAL (80 aa)) enclose the TRAM domain.

The protein belongs to the methylthiotransferase family. MiaB subfamily. Monomer. It depends on [4Fe-4S] cluster as a cofactor.

The protein localises to the cytoplasm. The enzyme catalyses N(6)-dimethylallyladenosine(37) in tRNA + (sulfur carrier)-SH + AH2 + 2 S-adenosyl-L-methionine = 2-methylsulfanyl-N(6)-dimethylallyladenosine(37) in tRNA + (sulfur carrier)-H + 5'-deoxyadenosine + L-methionine + A + S-adenosyl-L-homocysteine + 2 H(+). Catalyzes the methylthiolation of N6-(dimethylallyl)adenosine (i(6)A), leading to the formation of 2-methylthio-N6-(dimethylallyl)adenosine (ms(2)i(6)A) at position 37 in tRNAs that read codons beginning with uridine. The chain is tRNA-2-methylthio-N(6)-dimethylallyladenosine synthase from Mycobacterium sp. (strain MCS).